The following is a 163-amino-acid chain: Bursicon (163 aa).

Residues 1–23 form the signal peptide; it reads MKSSVCVLLKVLACILLPGGLNA. Cystine bridges form between cysteine 39–cysteine 88, cysteine 53–cysteine 102, cysteine 63–cysteine 123, cysteine 67–cysteine 125, and cysteine 85–cysteine 128. One can recognise a CTCK domain in the interval 39–129; that stretch reads CQVTPVIHVL…PLECMCRPCT (91 aa).

In terms of assembly, heterodimer of burs and pburs.

Its subcellular location is the secreted. Final heterodimeric neurohormone released at the end of the molting cycle, involved in the sclerotization (tanning) of the insect cuticle, melanization and wing spreading. The chain is Bursicon from Aedes aegypti (Yellowfever mosquito).